The following is a 317-amino-acid chain: tRNA dimethylallyltransferase (317 aa).

19 to 26 is a binding site for ATP; sequence GPTASGKS. A substrate-binding site is contributed by 21-26; the sequence is TASGKS. An interaction with substrate tRNA region spans residues 49–52; it reads DSAQ.

It belongs to the IPP transferase family. As to quaternary structure, monomer. Requires Mg(2+) as cofactor.

The enzyme catalyses adenosine(37) in tRNA + dimethylallyl diphosphate = N(6)-dimethylallyladenosine(37) in tRNA + diphosphate. Functionally, catalyzes the transfer of a dimethylallyl group onto the adenine at position 37 in tRNAs that read codons beginning with uridine, leading to the formation of N6-(dimethylallyl)adenosine (i(6)A). In Erythrobacter litoralis (strain HTCC2594), this protein is tRNA dimethylallyltransferase.